The primary structure comprises 153 residues: Ribosome maturation factor RimP (153 aa).

This sequence belongs to the RimP family.

The protein localises to the cytoplasm. Functionally, required for maturation of 30S ribosomal subunits. This Clostridioides difficile (strain 630) (Peptoclostridium difficile) protein is Ribosome maturation factor RimP.